The following is a 106-amino-acid chain: CRISPR-associated endoribonuclease Cas2 (106 aa).

A Mg(2+)-binding site is contributed by aspartate 22.

It belongs to the CRISPR-associated endoribonuclease Cas2 protein family. In terms of assembly, homodimer, forms a heterotetramer with a Cas1 homodimer. Requires Mg(2+) as cofactor.

Functionally, CRISPR (clustered regularly interspaced short palindromic repeat), is an adaptive immune system that provides protection against mobile genetic elements (viruses, transposable elements and conjugative plasmids). CRISPR clusters contain sequences complementary to antecedent mobile elements and target invading nucleic acids. CRISPR clusters are transcribed and processed into CRISPR RNA (crRNA). Functions as a ssRNA-specific endoribonuclease. Involved in the integration of spacer DNA into the CRISPR cassette. This chain is CRISPR-associated endoribonuclease Cas2, found in Fusobacterium nucleatum subsp. nucleatum (strain ATCC 25586 / DSM 15643 / BCRC 10681 / CIP 101130 / JCM 8532 / KCTC 2640 / LMG 13131 / VPI 4355).